Here is a 283-residue protein sequence, read N- to C-terminus: Cyclin-C (283 aa).

The Cyclin N-terminal domain maps to 46–144 (NVIQALGEHL…VLECEFYLLE (99 aa)). Residues 252-283 (TILSKMPKPKPPPNSEGEQGPNGSQNSSYSQS) are disordered. The span at 272–283 (PNGSQNSSYSQS) shows a compositional bias: polar residues. Ser-275 is subject to Phosphoserine.

Belongs to the cyclin family. Cyclin C subfamily. In terms of assembly, component of the Mediator complex, which is composed of MED1, MED4, MED6, MED7, MED8, MED9, MED10, MED11, MED12, MED13, MED13L, MED14, MED15, MED16, MED17, MED18, MED19, MED20, MED21, MED22, MED23, MED24, MED25, MED26, MED27, MED29, MED30, MED31, CCNC, CDK8 and CDC2L6/CDK11. The MED12, MED13, CCNC and CDK8 subunits form a distinct module termed the CDK8 module. Mediator containing the CDK8 module is less active than Mediator lacking this module in supporting transcriptional activation. Individual preparations of the Mediator complex lacking one or more distinct subunits have been variously termed ARC, CRSP, DRIP, PC2, SMCC and TRAP. The cylin/CDK pair formed by CCNC/CDK8 also associates with the large subunit of RNA polymerase II.

It is found in the nucleus. Its function is as follows. Component of the Mediator complex, a coactivator involved in regulated gene transcription of nearly all RNA polymerase II-dependent genes. Mediator functions as a bridge to convey information from gene-specific regulatory proteins to the basal RNA polymerase II transcription machinery. Mediator is recruited to promoters by direct interactions with regulatory proteins and serves as a scaffold for the assembly of a functional preinitiation complex with RNA polymerase II and the general transcription factors. Binds to and activates cyclin-dependent kinase CDK8 that phosphorylates the CTD (C-terminal domain) of the large subunit of RNA polymerase II (RNAp II), which may inhibit the formation of a transcription initiation complex. The polypeptide is Cyclin-C (CCNC) (Bos taurus (Bovine)).